Reading from the N-terminus, the 348-residue chain is Major outer membrane protein P.IB (348 aa).

An N-terminal signal peptide occupies residues 1 to 19 (MKKSLIALTLAALPVAATA).

This sequence belongs to the Gram-negative porin family. As to quaternary structure, homotrimer.

It is found in the cell outer membrane. Its function is as follows. Serves as a slightly cation selective porin. Major antigen on the gonococcal cell surface and it may have pathogenic properties in addition to its porin activity. The polypeptide is Major outer membrane protein P.IB (porB) (Neisseria gonorrhoeae).